Reading from the N-terminus, the 218-residue chain is Probable transaldolase (218 aa).

Residue K84 is the Schiff-base intermediate with substrate of the active site.

Belongs to the transaldolase family. Type 3B subfamily.

It localises to the cytoplasm. It catalyses the reaction D-sedoheptulose 7-phosphate + D-glyceraldehyde 3-phosphate = D-erythrose 4-phosphate + beta-D-fructose 6-phosphate. It functions in the pathway carbohydrate degradation; pentose phosphate pathway; D-glyceraldehyde 3-phosphate and beta-D-fructose 6-phosphate from D-ribose 5-phosphate and D-xylulose 5-phosphate (non-oxidative stage): step 2/3. Its function is as follows. Transaldolase is important for the balance of metabolites in the pentose-phosphate pathway. The protein is Probable transaldolase of Sulfurihydrogenibium sp. (strain YO3AOP1).